A 353-amino-acid polypeptide reads, in one-letter code: DNA-directed RNA polymerase subunit alpha (353 aa).

The segment at 1-234 is alpha N-terminal domain (alpha-NTD); that stretch reads MVQEKVRVST…DLFIPFLHTE (234 aa). An alpha C-terminal domain (alpha-CTD) region spans residues 266–353; it reads KKIALKSIFI…LAQSIYSESG (88 aa).

Belongs to the RNA polymerase alpha chain family. As to quaternary structure, in plastids the minimal PEP RNA polymerase catalytic core is composed of four subunits: alpha, beta, beta', and beta''. When a (nuclear-encoded) sigma factor is associated with the core the holoenzyme is formed, which can initiate transcription.

The protein resides in the plastid. It is found in the chloroplast. It catalyses the reaction RNA(n) + a ribonucleoside 5'-triphosphate = RNA(n+1) + diphosphate. In terms of biological role, DNA-dependent RNA polymerase catalyzes the transcription of DNA into RNA using the four ribonucleoside triphosphates as substrates. The protein is DNA-directed RNA polymerase subunit alpha of Panax ginseng (Korean ginseng).